A 145-amino-acid chain; its full sequence is Large ribosomal subunit protein uL15 (145 aa).

Residues 1-13 are compositionally biased toward basic residues; that stretch reads MIRSKRKINKLRG. Residues 1 to 44 form a disordered region; it reads MIRSKRKINKLRGSRSNGGGCTKKRRGAGNKGGRGNAGASKQHW.

It belongs to the universal ribosomal protein uL15 family. Part of the 50S ribosomal subunit.

Binds to the 23S rRNA. In Methanobrevibacter smithii (strain ATCC 35061 / DSM 861 / OCM 144 / PS), this protein is Large ribosomal subunit protein uL15.